A 271-amino-acid chain; its full sequence is Undecaprenyl-diphosphatase (271 aa).

8 consecutive transmembrane segments (helical) span residues 2–22 (LLILKAIILAIVEGLTEFVPV), 42–62 (ANLFNVVIQLGAILAVVVVYW), 80–100 (LRFWINIVVACIPAVIFGFSL), 108–128 (LFNPITVAIGLVIGGILMIIV), 149–168 (SIFVGMFQCLALWPGMSRSA), 175–195 (WIAGLSPVVAAEFSFFLAIPV), 214–234 (IEFIALIVGFVGAFLVSLVVI), and 248–268 (IFAIYRIFIGAILLILAIFKI).

The protein belongs to the UppP family.

It localises to the cell membrane. It catalyses the reaction di-trans,octa-cis-undecaprenyl diphosphate + H2O = di-trans,octa-cis-undecaprenyl phosphate + phosphate + H(+). In terms of biological role, catalyzes the dephosphorylation of undecaprenyl diphosphate (UPP). Confers resistance to bacitracin. The chain is Undecaprenyl-diphosphatase from Clostridium tetani (strain Massachusetts / E88).